A 209-amino-acid polypeptide reads, in one-letter code: Imidazole glycerol phosphate synthase subunit HisH (209 aa).

One can recognise a Glutamine amidotransferase type-1 domain in the interval 1–205 (MIAIIDYGMG…QGVVEAWKSS (205 aa)). C79 (nucleophile) is an active-site residue. Residues H180 and E182 contribute to the active site.

In terms of assembly, heterodimer of HisH and HisF.

Its subcellular location is the cytoplasm. The catalysed reaction is 5-[(5-phospho-1-deoxy-D-ribulos-1-ylimino)methylamino]-1-(5-phospho-beta-D-ribosyl)imidazole-4-carboxamide + L-glutamine = D-erythro-1-(imidazol-4-yl)glycerol 3-phosphate + 5-amino-1-(5-phospho-beta-D-ribosyl)imidazole-4-carboxamide + L-glutamate + H(+). The enzyme catalyses L-glutamine + H2O = L-glutamate + NH4(+). It participates in amino-acid biosynthesis; L-histidine biosynthesis; L-histidine from 5-phospho-alpha-D-ribose 1-diphosphate: step 5/9. In terms of biological role, IGPS catalyzes the conversion of PRFAR and glutamine to IGP, AICAR and glutamate. The HisH subunit catalyzes the hydrolysis of glutamine to glutamate and ammonia as part of the synthesis of IGP and AICAR. The resulting ammonia molecule is channeled to the active site of HisF. The chain is Imidazole glycerol phosphate synthase subunit HisH from Bacillus cereus (strain ATCC 14579 / DSM 31 / CCUG 7414 / JCM 2152 / NBRC 15305 / NCIMB 9373 / NCTC 2599 / NRRL B-3711).